Here is a 267-residue protein sequence, read N- to C-terminus: Tryptophan synthase alpha chain (267 aa).

Catalysis depends on proton acceptor residues Glu43 and Asp54.

Belongs to the TrpA family. In terms of assembly, tetramer of two alpha and two beta chains.

The enzyme catalyses (1S,2R)-1-C-(indol-3-yl)glycerol 3-phosphate + L-serine = D-glyceraldehyde 3-phosphate + L-tryptophan + H2O. It participates in amino-acid biosynthesis; L-tryptophan biosynthesis; L-tryptophan from chorismate: step 5/5. Functionally, the alpha subunit is responsible for the aldol cleavage of indoleglycerol phosphate to indole and glyceraldehyde 3-phosphate. This is Tryptophan synthase alpha chain from Bacillus subtilis subsp. natto.